The primary structure comprises 128 residues: Large ribosomal subunit protein bL12 (128 aa).

This sequence belongs to the bacterial ribosomal protein bL12 family. In terms of assembly, homodimer. Part of the ribosomal stalk of the 50S ribosomal subunit. Forms a multimeric L10(L12)X complex, where L10 forms an elongated spine to which 2 to 4 L12 dimers bind in a sequential fashion. Binds GTP-bound translation factors.

Its function is as follows. Forms part of the ribosomal stalk which helps the ribosome interact with GTP-bound translation factors. Is thus essential for accurate translation. The chain is Large ribosomal subunit protein bL12 from Desulfosudis oleivorans (strain DSM 6200 / JCM 39069 / Hxd3) (Desulfococcus oleovorans).